Reading from the N-terminus, the 99-residue chain is Nucleoid-associated protein SSU98_0195 (99 aa).

Belongs to the YbaB/EbfC family. Homodimer.

The protein localises to the cytoplasm. Its subcellular location is the nucleoid. Its function is as follows. Binds to DNA and alters its conformation. May be involved in regulation of gene expression, nucleoid organization and DNA protection. The chain is Nucleoid-associated protein SSU98_0195 from Streptococcus suis (strain 98HAH33).